Here is a 618-residue protein sequence, read N- to C-terminus: MDMEKLKEILLKAKKLGFSDKQIANLLGMDEIEVRDLRKKLNIIPLYKMVDTCAAEFEAKTPYYYSAYETFVYKEQDESNPSDRKKVIIIGSGPIRIGQGIEFDYSSVHAVLALKEMGIEAIIINNNPETVSTDYDTSDKLYFEPITFEEVLNIAEREKEKGELLGVIVQFGGQTAINLAMKLKNAGVNILGTTPENINAAEDREEFSKLLKKLNIPQAEGGTAYTKEEALEIAKRIGYPVLVRPSYVLGGRAMQIVYSEDELIEYMEEAVKVSEEHPVLIDKFLEDAIELDVDAVCDGESVLIGAIMEHIEEAGVHSGDSATVIPPQTLPKEIIDTVIDYTAKLARALNIVGLLNVQYAVKDGVVYVLEANPRASRTVPYVSKSVGIPLAKLATKIMLGKKLEELIKDYDVEKVAEKVWIAKPKYVSIKEAVFPFQKLPGVDPVLGPEMKSTGEAIGIDKDFGRAYYKAQLSANMELPIVGNVFISVRDRDKKHIVDVAKKLHELGFTIYATEGTAKVLRENGIPAILVKKISESPNDNILKLMRDGKMHLIINTSSGKKAKSDGYYIRRAAVDLGIPYITTIPGAKAAVKAIEAVKTGELSVYSLDELDARIKNRF.

An oligomerization domain region spans residues 1 to 78; sequence MDMEKLKEIL…ETFVYKEQDE (78 aa). The interval 79-477 is carbamoyl phosphate synthetic domain; it reads SNPSDRKKVI…YKAQLSANME (399 aa). The ATP-grasp domain occupies 208–399; that stretch reads SKLLKKLNIP…LAKLATKIML (192 aa). Positions 244, 283, 285, 290, 315, 316, 317, 318, 358, and 370 each coordinate ATP. Residues Q358, E370, and N372 each coordinate Mg(2+). The Mn(2+) site is built by Q358, E370, and N372. The MGS-like domain occupies 476 to 618; sequence MELPIVGNVF…ELDARIKNRF (143 aa). Residues 478 to 618 are allosteric domain; that stretch reads LPIVGNVFIS…ELDARIKNRF (141 aa).

The protein belongs to the CarB family. In terms of assembly, composed of two chains; the small (or glutamine) chain promotes the hydrolysis of glutamine to ammonia, which is used by the large (or ammonia) chain to synthesize carbamoyl phosphate. Tetramer of heterodimers (alpha,beta)4. Requires Mg(2+) as cofactor. The cofactor is Mn(2+).

It carries out the reaction hydrogencarbonate + L-glutamine + 2 ATP + H2O = carbamoyl phosphate + L-glutamate + 2 ADP + phosphate + 2 H(+). It catalyses the reaction hydrogencarbonate + NH4(+) + 2 ATP = carbamoyl phosphate + 2 ADP + phosphate + 2 H(+). It functions in the pathway amino-acid biosynthesis; L-arginine biosynthesis; carbamoyl phosphate from bicarbonate: step 1/1. It participates in pyrimidine metabolism; UMP biosynthesis via de novo pathway; (S)-dihydroorotate from bicarbonate: step 1/3. Functionally, large subunit of the glutamine-dependent carbamoyl phosphate synthetase (CPSase). CPSase catalyzes the formation of carbamoyl phosphate from the ammonia moiety of glutamine, carbonate, and phosphate donated by ATP, constituting the first step of 2 biosynthetic pathways, one leading to arginine and/or urea and the other to pyrimidine nucleotides. The large subunit (synthetase) binds the substrates ammonia (free or transferred from glutamine from the small subunit), hydrogencarbonate and ATP and carries out an ATP-coupled ligase reaction, activating hydrogencarbonate by forming carboxy phosphate which reacts with ammonia to form carbamoyl phosphate. This Methanocaldococcus jannaschii (strain ATCC 43067 / DSM 2661 / JAL-1 / JCM 10045 / NBRC 100440) (Methanococcus jannaschii) protein is Carbamoyl phosphate synthase large chain, C-terminal section (carB2).